A 359-amino-acid chain; its full sequence is CMP-N-acetylneuraminate-poly-alpha-2,8-sialyltransferase (359 aa).

Over 1 to 7 (MRSIRKR) the chain is Cytoplasmic. The chain crosses the membrane as a helical; Signal-anchor for type II membrane protein span at residues 8–20 (WTICTISLLLIFY). Topologically, residues 21 to 359 (KTKEIARTEE…KLTTGKCVKQ (339 aa)) are lumenal. Asn-50, Asn-74, and Asn-119 each carry an N-linked (GlcNAc...) asparagine glycan. 2 cysteine pairs are disulfide-bonded: Cys-142-Cys-292 and Cys-156-Cys-356. CMP-N-acetyl-beta-neuraminate contacts are provided by Asn-147 and Asn-170. Residues Asn-204 and Asn-219 are each glycosylated (N-linked (GlcNAc...) asparagine). The CMP-N-acetyl-beta-neuraminate site is built by Ser-279, Thr-280, Gly-281, and Trp-301. His-331 functions as the Proton donor/acceptor in the catalytic mechanism.

It belongs to the glycosyltransferase 29 family. Post-translationally, autopolysialylated.

The protein resides in the golgi apparatus membrane. It is found in the secreted. The enzyme catalyses [N-acetyl-alpha-D-neuraminosyl-(2-&gt;8)](n) + CMP-N-acetyl-beta-neuraminate = [N-acetyl-alpha-D-neuraminosyl-(2-&gt;8)](n+1) + CMP + H(+). Functionally, catalyzes the transfer of a sialic acid from a CMP-linked sialic acid donor onto a terminal alpha-2,3-, alpha-2,6-, or alpha-2,8-linked sialic acid of an N-linked glycan protein acceptor through alpha-2,8-linkages. Therefore, participates in polysialic acid synthesis on various sialylated N-acetyllactosaminyl oligosaccharides, including NCAM1 N-glycans, FETUB N-glycans and AHSG. It is noteworthy that alpha-2,3-linked sialic acid is apparently a better acceptor than alpha-2,6-linked sialic acid. The chain is CMP-N-acetylneuraminate-poly-alpha-2,8-sialyltransferase (ST8SIA4) from Pan troglodytes (Chimpanzee).